We begin with the raw amino-acid sequence, 181 residues long: Thioredoxin M-type, chloroplastic (181 aa).

Residues 1–67 (MAIENCLQLS…RQFRYSSVVC (67 aa)) constitute a chloroplast transit peptide. One can recognise a Thioredoxin domain in the interval 68–180 (KASEAVKEVQ…LTDSIEKYLS (113 aa)). Catalysis depends on nucleophile residues Cys104 and Cys107. An intrachain disulfide couples Cys104 to Cys107.

Belongs to the thioredoxin family. Plant M-type subfamily. In terms of assembly, forms a complex with heterodimeric ferredoxin-thioredoxin reductase (FTR) and ferredoxin.

The protein localises to the plastid. It is found in the chloroplast. Participates in various redox reactions through the reversible oxidation of the active center dithiol to a disulfide. The M form is known to activate NADP-malate dehydrogenase. This Spinacia oleracea (Spinach) protein is Thioredoxin M-type, chloroplastic.